Consider the following 447-residue polypeptide: Elongation factor 1-alpha (447 aa).

Residues 5-230 form the tr-type G domain; sequence KIHISIVVIG…DQINEPKRPS (226 aa). The G1 stretch occupies residues 14 to 21; that stretch reads GHVDSGKS. Position 14-21 (14-21) interacts with GTP; the sequence is GHVDSGKS. Lysine 55 carries the N6,N6-dimethyllysine modification. Residues 70-74 form a G2 region; the sequence is GITID. At lysine 79 the chain carries N6,N6,N6-trimethyllysine. Residues 91-94 form a G3 region; that stretch reads DAPG. GTP-binding positions include 91–95 and 153–156; these read DAPGH and NKMD. Residues 153–156 form a G4 region; the sequence is NKMD. Lysine 187 is subject to N6,N6,N6-trimethyllysine. Residues 194-196 are G5; sequence SGF. Lysine 261 carries the N6-methyllysine modification. 5-glutamyl glycerylphosphorylethanolamine is present on glutamate 289. Lysine 306 is subject to N6,N6,N6-trimethyllysine. The residue at position 362 (glutamate 362) is a 5-glutamyl glycerylphosphorylethanolamine. Lysine 396 carries the N6,N6,N6-trimethyllysine modification.

This sequence belongs to the TRAFAC class translation factor GTPase superfamily. Classic translation factor GTPase family. EF-Tu/EF-1A subfamily.

It is found in the cytoplasm. Functionally, this protein promotes the GTP-dependent binding of aminoacyl-tRNA to the A-site of ribosomes during protein biosynthesis. This is Elongation factor 1-alpha from Hordeum vulgare (Barley).